The sequence spans 399 residues: Enoyl-[acyl-carrier-protein] reductase [NADH] 2 (399 aa).

NAD(+)-binding positions include Gly-48–Phe-53, Phe-75–Glu-76, Asp-112–Ala-113, and Leu-141–Ala-142. Tyr-227 lines the substrate pocket. Tyr-237 (proton donor) is an active-site residue. NAD(+)-binding positions include Lys-246 and Leu-275–Thr-277.

It belongs to the TER reductase family. Monomer.

It catalyses the reaction a 2,3-saturated acyl-[ACP] + NAD(+) = a (2E)-enoyl-[ACP] + NADH + H(+). Its pathway is lipid metabolism; fatty acid biosynthesis. Functionally, involved in the final reduction of the elongation cycle of fatty acid synthesis (FAS II). Catalyzes the reduction of a carbon-carbon double bond in an enoyl moiety that is covalently linked to an acyl carrier protein (ACP). This is Enoyl-[acyl-carrier-protein] reductase [NADH] 2 from Vibrio parahaemolyticus serotype O3:K6 (strain RIMD 2210633).